We begin with the raw amino-acid sequence, 77 residues long: U11-lycotoxin-Ls1d (77 aa).

The signal sequence occupies residues 1–20 (MKLIIFTGLVLFAIVSLIEA). Residues 21–26 (EEESGR) constitute a propeptide that is removed on maturation.

Belongs to the neurotoxin 19 (CSTX) family. 10 (U11-Lctx) subfamily. In terms of processing, contains 4 disulfide bonds. Expressed by the venom gland.

The protein resides in the secreted. This Lycosa singoriensis (Wolf spider) protein is U11-lycotoxin-Ls1d.